Here is a 30-residue protein sequence, read N- to C-terminus: Hainantoxin F6-34.84 (30 aa).

Disulfide bonds link cysteine 2–cysteine 15 and cysteine 9–cysteine 24.

It belongs to the AVIT (prokineticin) family. Expressed by the venom gland.

The protein localises to the secreted. The protein is Hainantoxin F6-34.84 of Cyriopagopus hainanus (Chinese bird spider).